The primary structure comprises 308 residues: GTPase Era (308 aa).

The region spanning 9 to 179 is the Era-type G domain; it reads RAGFVALIGE…RAWLGASLPE (171 aa). Positions 17-24 are G1; it reads GEPNAGKS. A GTP-binding site is contributed by 17 to 24; it reads GEPNAGKS. A G2 region spans residues 43-47; it reads QTTRA. Residues 64-67 are G3; the sequence is DTPG. Residues 64 to 68 and 129 to 132 contribute to the GTP site; these read DTPGL and NKID. The G4 stretch occupies residues 129-132; it reads NKID. The tract at residues 158 to 160 is G5; that stretch reads ISA. Residues 210–287 enclose the KH type-2 domain; the sequence is LHQELPYQLT…HLFLQVKVRP (78 aa).

This sequence belongs to the TRAFAC class TrmE-Era-EngA-EngB-Septin-like GTPase superfamily. Era GTPase family. As to quaternary structure, monomer.

Its subcellular location is the cytoplasm. The protein resides in the cell inner membrane. Functionally, an essential GTPase that binds both GDP and GTP, with rapid nucleotide exchange. Plays a role in 16S rRNA processing and 30S ribosomal subunit biogenesis and possibly also in cell cycle regulation and energy metabolism. The chain is GTPase Era from Dinoroseobacter shibae (strain DSM 16493 / NCIMB 14021 / DFL 12).